A 170-amino-acid polypeptide reads, in one-letter code: Protein ECM34 (170 aa).

Asn-45 is a glycosylation site (N-linked (GlcNAc...) asparagine). The next 2 membrane-spanning stretches (helical) occupy residues 51-71 (IWLLLCLTLIVGWKVFSGIGG) and 98-118 (TIVILVISLAVSFSWEAFKMY).

The protein belongs to the DUP/COS family.

Its subcellular location is the membrane. May be involved in cell wall organization and biogenesis. This chain is Protein ECM34 (ECM34), found in Saccharomyces cerevisiae (strain ATCC 204508 / S288c) (Baker's yeast).